A 256-amino-acid polypeptide reads, in one-letter code: Small ribosomal subunit protein eS1 (256 aa).

The span at 1–18 (MAVGKNKRLSKGKKGIKK) shows a compositional bias: basic residues. Residues 1-20 (MAVGKNKRLSKGKKGIKKRT) form a disordered region. At alanine 2 the chain carries N-acetylalanine; partial.

Belongs to the eukaryotic ribosomal protein eS1 family. In terms of assembly, component of the small ribosomal subunit. Mature ribosomes consist of a small (40S) and a large (60S) subunit. The 40S subunit contains about 33 different proteins and 1 molecule of RNA (18S). The 60S subunit contains about 49 different proteins and 3 molecules of RNA (25S, 5.8S and 5S).

The protein localises to the cytoplasm. The chain is Small ribosomal subunit protein eS1 (rps1) from Aspergillus terreus (strain NIH 2624 / FGSC A1156).